The sequence spans 122 residues: Big defensin (122 aa).

The first 28 residues, 1–28 (MTRPSLVRCYSLFFTALIVMAIICPAWS), serve as a signal peptide directing secretion. Positions 29–34 (EEIPKS) are excised as a propeptide. Disulfide bonds link Cys88–Cys119, Cys95–Cys114, and Cys99–Cys120.

It belongs to the big defensin family. In terms of tissue distribution, expressed in hemocytes.

The protein localises to the secreted. Its function is as follows. Significantly inhibits the growth of Gram-negative and Gram-positive bacteria and fungi in vitro. The protein is Big defensin of Argopecten irradians (Bay scallop).